Here is a 476-residue protein sequence, read N- to C-terminus: NADH-quinone oxidoreductase subunit N (476 aa).

Helical transmembrane passes span 7–27 (LTVEILTAALGLGLLALGLLV), 33–53 (RGIAYVATAGLAGILAAAFGM), 59–79 (VVLGGYVIDPFGTYFKILFLV), 100–120 (GEYYALLVLATLGMMVLASSG), 122–142 (LVSLYLGLELMTITFCILAAF), 156–176 (YVLLGAMSSAIFLYGLSLVYG), 199–219 (LLLGTIFILAGFAFKVTAVPF), 237–257 (FLSVASKAAAFAALVRVFFGA), 265–285 (WVQLFIALAVLTIVLGNLVAI), 305–325 (LLLGIVSFSVLGVGAVMYYAM), 363–383 (VAALMLFSLLSLAGIPPMAGF), 399–419 (IWLAILGILMSMVSVYYYLLV), and 437–457 (VAPGLQVAMVVSLLILFILGI).

This sequence belongs to the complex I subunit 2 family. In terms of assembly, NDH-1 is composed of 14 different subunits. Subunits NuoA, H, J, K, L, M, N constitute the membrane sector of the complex.

The protein resides in the cell membrane. It catalyses the reaction a quinone + NADH + 5 H(+)(in) = a quinol + NAD(+) + 4 H(+)(out). Functionally, NDH-1 shuttles electrons from NADH, via FMN and iron-sulfur (Fe-S) centers, to quinones in the respiratory chain. The immediate electron acceptor for the enzyme in this species is believed to be a menaquinone. Couples the redox reaction to proton translocation (for every two electrons transferred, four hydrogen ions are translocated across the cytoplasmic membrane), and thus conserves the redox energy in a proton gradient. The sequence is that of NADH-quinone oxidoreductase subunit N from Moorella thermoacetica (strain ATCC 39073 / JCM 9320).